A 602-amino-acid polypeptide reads, in one-letter code: mRNA-capping enzyme subunit beta (602 aa).

The interval 1 to 249 (MSEHHSKRAL…NESNSEETHD (249 aa)) is disordered. A compositionally biased stretch (basic and acidic residues) spans 15–42 (LVNHDENDKSKLQKLADNESSVRSDDNR). A compositionally biased stretch (low complexity) spans 48 to 64 (NIVNGNNSNSDLNSNGV). Residues 65 to 76 (IEEDTDTDDDVG) show a composition bias toward acidic residues. Positions 88–110 (DYDKQDRFSPEKKRIQARKKDTS) are enriched in basic and acidic residues. Residues 114–128 (PSISNESPSNSKESS) show a composition bias toward low complexity. Residues 141–169 (TDRKDSSEEKPDLTGPELVKEPDTNEYKR) are compositionally biased toward basic and acidic residues. The span at 171 to 181 (SIQSITNAEDT) shows a compositional bias: polar residues. Basic and acidic residues-rich tracts occupy residues 213-222 (TEEHKPKTET) and 231-249 (QENKQKDNVNESNSEETHD). Catalysis depends on lysine 276, which acts as the N6-GMP-lysine intermediate.

It belongs to the fungal TPase family. Heterodimer. The mRNA-capping enzyme is composed of two separate chains alpha and beta, respectively a mRNA guanylyltransferase and an mRNA 5'-triphosphate monophosphatase. The cofactor is Mg(2+).

It localises to the nucleus. It catalyses the reaction a 5'-end triphospho-ribonucleoside in mRNA + H2O = a 5'-end diphospho-ribonucleoside in mRNA + phosphate + H(+). In terms of biological role, first step of mRNA capping. Converts the 5'-triphosphate end of a nascent mRNA chain into a diphosphate end. The protein is mRNA-capping enzyme subunit beta (CET1) of Candida glabrata (strain ATCC 2001 / BCRC 20586 / JCM 3761 / NBRC 0622 / NRRL Y-65 / CBS 138) (Yeast).